The primary structure comprises 103 residues: N(4)-acetylcytidine amidohydrolase (103 aa).

An ASCH domain is found at 6–92 (TFFERFEPGI…VIQEIYPGLE (87 aa)). Lys-20 acts as the Proton acceptor in catalysis. The active-site Nucleophile is the Thr-23. Glu-73 (proton donor) is an active-site residue.

Belongs to the N(4)-acetylcytidine amidohydrolase family.

The enzyme catalyses N(4)-acetylcytidine + H2O = cytidine + acetate + H(+). The catalysed reaction is N(4)-acetyl-2'-deoxycytidine + H2O = 2'-deoxycytidine + acetate + H(+). It catalyses the reaction N(4)-acetylcytosine + H2O = cytosine + acetate + H(+). In terms of biological role, catalyzes the hydrolysis of N(4)-acetylcytidine (ac4C). The polypeptide is N(4)-acetylcytidine amidohydrolase (Shewanella sp. (strain MR-7)).